We begin with the raw amino-acid sequence, 139 residues long: Nucleoside diphosphate kinase (139 aa).

ATP-binding residues include Lys-10, Phe-58, Arg-86, Thr-92, Arg-103, and Asn-113. His-116 (pros-phosphohistidine intermediate) is an active-site residue.

It belongs to the NDK family. As to quaternary structure, homotetramer. It depends on Mg(2+) as a cofactor.

The protein resides in the cytoplasm. It catalyses the reaction a 2'-deoxyribonucleoside 5'-diphosphate + ATP = a 2'-deoxyribonucleoside 5'-triphosphate + ADP. The enzyme catalyses a ribonucleoside 5'-diphosphate + ATP = a ribonucleoside 5'-triphosphate + ADP. Its function is as follows. Major role in the synthesis of nucleoside triphosphates other than ATP. The ATP gamma phosphate is transferred to the NDP beta phosphate via a ping-pong mechanism, using a phosphorylated active-site intermediate. The protein is Nucleoside diphosphate kinase of Oleidesulfovibrio alaskensis (strain ATCC BAA-1058 / DSM 17464 / G20) (Desulfovibrio alaskensis).